The following is a 410-amino-acid chain: MSSAVVVSSENLDGQQQSSSTPASPAAEKVNLLGMSRAELEKFFEDIGEKKFRAGQVMKWIHQYFVTDFAEMTNISGKLRAKLEQICEIKAPEVVHRHYSKDGTRKWVFRVGEGSGSLVETVLIPAEDKTGSRKTLCISSQVGCALDCSFCSTGKQGFQRDLTPDEIIGQLWMANYSYMEEVPVAERERSVTNVVMMGMGEPLLNYDAVLSSMHIMLDDFAYGMSKRRVTLSTSGVVPKIDQLAKDIDVALAISLHAPNDELRNELVPINKKYPLAQLIAACQRYIAKDGNESARKHVTIEYVMLEGVNDQPEHAQQLLKLLKNLPSKINLIPFNPFPHAPYGRSSRNRIISFQKTLSDAGFVCTIRQTRGDDIDAACGQLVGQVADRTRRAEQWQKKVAQRQEILRTQG.

The tract at residues 7–26 is disordered; that stretch reads VSSENLDGQQQSSSTPASPA. Low complexity predominate over residues 15 to 26; that stretch reads QQQSSSTPASPA. Glu120 serves as the catalytic Proton acceptor. Positions 130–373 constitute a Radical SAM core domain; it reads TGSRKTLCIS…CTIRQTRGDD (244 aa). A disulfide bond links Cys137 and Cys378. [4Fe-4S] cluster-binding residues include Cys144, Cys148, and Cys151. S-adenosyl-L-methionine is bound by residues 200 to 201, Ser232, 254 to 256, and Asn335; these read GE and SLH. Cys378 (S-methylcysteine intermediate) is an active-site residue.

It belongs to the radical SAM superfamily. RlmN family. [4Fe-4S] cluster is required as a cofactor.

It is found in the cytoplasm. It carries out the reaction adenosine(2503) in 23S rRNA + 2 reduced [2Fe-2S]-[ferredoxin] + 2 S-adenosyl-L-methionine = 2-methyladenosine(2503) in 23S rRNA + 5'-deoxyadenosine + L-methionine + 2 oxidized [2Fe-2S]-[ferredoxin] + S-adenosyl-L-homocysteine. The catalysed reaction is adenosine(37) in tRNA + 2 reduced [2Fe-2S]-[ferredoxin] + 2 S-adenosyl-L-methionine = 2-methyladenosine(37) in tRNA + 5'-deoxyadenosine + L-methionine + 2 oxidized [2Fe-2S]-[ferredoxin] + S-adenosyl-L-homocysteine. Specifically methylates position 2 of adenine 2503 in 23S rRNA and position 2 of adenine 37 in tRNAs. m2A2503 modification seems to play a crucial role in the proofreading step occurring at the peptidyl transferase center and thus would serve to optimize ribosomal fidelity. This chain is Dual-specificity RNA methyltransferase RlmN, found in Acinetobacter baumannii (strain AB307-0294).